The primary structure comprises 500 residues: Na(+)/H(+) antiporter NhaB (500 aa).

13 helical membrane-spanning segments follow: residues 11–31 (HGFLGQSPLWYKAIICLFLVL), 34–54 (LLLVTVGPVAAGWALVLEFIF), 58–78 (MALKCYPLMPGGLLLVEALLL), 96–116 (VILLLMFMVAGIHFMKELLLF), 129–149 (AILSLLFCVLSAFLSAFLDAL), 150–170 (TVTAVIISAAVGFYAVYHRVA), 205–225 (LLMHGAVGTALGGVCTLVGEP), 241–261 (FFFKVAPVSLPVLGAGLLTCV), 311–331 (ILIICLGLHVAEVGLIGLMVI), 350–370 (FQDAMPFTSLLVVFFAVVAVI), 394–414 (MLYLANGLLSAISDNVFVATI), 450–470 (ATPNGQAAFLFLLTSAIAPLI), and 477–497 (MVWMALPYTVVMGGLGWWAVT).

This sequence belongs to the NhaB Na(+)/H(+) (TC 2.A.34) antiporter family.

The protein resides in the cell inner membrane. The catalysed reaction is 2 Na(+)(in) + 3 H(+)(out) = 2 Na(+)(out) + 3 H(+)(in). Its function is as follows. Na(+)/H(+) antiporter that extrudes sodium in exchange for external protons. This chain is Na(+)/H(+) antiporter NhaB, found in Pseudomonas putida (strain GB-1).